Here is an 87-residue protein sequence, read N- to C-terminus: uncharacterized protein (87 aa).

The N-terminal stretch at 1–22 is a signal peptide; the sequence is MKIKTTVAALSVLSVLSFGAFA.

Belongs to the BhsA/McbA family.

Its subcellular location is the periplasm. This is an uncharacterized protein from Escherichia coli O6:H1 (strain CFT073 / ATCC 700928 / UPEC).